Reading from the N-terminus, the 359-residue chain is DNA integrity scanning protein DisA (359 aa).

The DAC domain maps to 7–145 (DPTGRAVLRA…DGRRWVLEDS (139 aa)). ATP is bound by residues G74, L92, and 105 to 109 (TRHRT).

Belongs to the DisA family. Homooctamer. Requires Mg(2+) as cofactor.

The catalysed reaction is 2 ATP = 3',3'-c-di-AMP + 2 diphosphate. In terms of biological role, participates in a DNA-damage check-point. DisA forms globular foci that rapidly scan along the chromosomes searching for lesions. Functionally, also has diadenylate cyclase activity, catalyzing the condensation of 2 ATP molecules into cyclic di-AMP (c-di-AMP). c-di-AMP likely acts as a signaling molecule that may couple DNA integrity with a cellular process. The polypeptide is DNA integrity scanning protein DisA (Beutenbergia cavernae (strain ATCC BAA-8 / DSM 12333 / CCUG 43141 / JCM 11478 / NBRC 16432 / NCIMB 13614 / HKI 0122)).